A 1751-amino-acid chain; its full sequence is MRIFHFSNKFPPDDLADLFRRLRLHSKCPNHVILARVLEEVTDVVREEIAELPAELRSLLPPFQSILDLAESFNWHQGPLSGTFECVFLVLMPVCLFVGRPDEFVFRRDTSLFTGLGLGFLAATAIVASPSLCSVPVTVAEVVRMAMRTGLLIYQRSQDLEPQSLDGALESWTSIVKGMGEVAVREGIDEYNSSTDTPQPSSIYISVVEPDGSVFINGPPSRLRKFFSTSGKVQSAAHAPLPVYGGPCHAPHLYDHSHSSWAVKKCRAKVLSRDLSHAAYLLSMADGNPLKADTVLELFESATYILLTSIIRWGDVVNAITASSPLLEKDMKLQVEILRPSPVVDGLVSAIQKSHPGCSAYVVDLGEWIFDDTHISPHGAHEKIAVIGMSCRLPGGADDLELLWELLREGRDVHRKVPADRYDVDSHTDITGKQRNTSHTPFGCFVDQPGLFDAGFFDMSPREAGQTDPTHRLALLTAYEALEQSGYVPDRTRSTRRERVGTIYGQCSDDYRECNAGQDIDMYFIPGNYRAFAPGRISYFFKFSGPSFNIDTACSASLAAVQIACSVLSRGEADMVVAGGLNILTGSDSFAGLSKGFFLSKTGNCQVFDDAADGYCRGDGIGSIILKRLSDAQQDNDNILGLILGSATNHSSNAISITHPHAPTQANLYRSTLMQAGVRPQDVDLVEMHGTGTQAGDAAEIESVTKVFSPAVPRRSQPLRISSVKANVGHGEAAAGITALIKALLIFKHNEIPPQVCLRTTLNSKFPDLRQLNVHIPKKIIPWPRLPGRKRYIMVNNFSAAGGNTSLLLEEPPARPDPKGCPQTRFVVTVSAKSTVSLIRNLEGLLGFLKMDPFVDLASLAYTTTARRMHHKYRIVVHGASIQEIVKSLEQHISIAETQCAIQKAPTIGFVFSGQGSFSQGVGRQLFQEYPPYRNEIQRLDEICTSHGFDSILPAITSRSSDILEISPFMAQLVTVCVQIALCRLWRSLGVIPNVVVGASLGEYAALYAAGTLSASDVIYLVGQRARLMQELCTINSHSMLAVKATIGEIRHTVRNNAYEFACINGPRDVTLAASVEDINDIQQTLVSQGYRVAKLNVPFAFHSSQIEPILEPYNKIAHSVIFRNLKTALISPLLSDVVFDNKSFPPSYLRDSTRGTVQFSDAMTKAQEIGLVDSKTVWVEIGVHQTYTGAMRANIPNLEVVAPSLRSDESNWHTLAASMSALHSAGVHLDWNTWYKPFESQLRLLNLPPYQWNLKNHWIQHNGDWLLLKDKRSRTGYERSPAPAPPPLRTALVHHILEESFGKDGGTVVIQSNVTDDEFHAVASGHQMSGRPLVSVFAYTDIALIMARYMYSRLKSGTELSAMDFGKVRVFQGLIPRKDRSKPQYVRMRMQADPMCSSMPLSLHRVLDDEMNEEELAIGVVTCGDSHSWRDEWAAYSYLLTSRIEALHQLADQGLASRVSKDLVYTLFKNVVDYAEHYRGIQSAVMYGLEAVADVILSPSQDSRWTAPPHHIDPITHVGGLILNAGPAMDHTNTIYIMEGWESMRFSDSLMAGELYRSYVKMNPANDNSGFFSGDVYILHGNRVIGRVREMTLRPLPRILMSRFFDPPDSQYGQMAQQEPSTALPSTPQHTSSAKTTESTPSQQDESDNTSLATPENENKAPISGSWPNANSQLVRDAIALIASETGVEPDALTDETEFSAVGVDSLLSLVLVEKFALELNIDLQGSFFLETPNVCDLKAYLEGNQMTLR.

Residues 19 to 249 (FRRLRLHSKC…PLPVYGGPCH (231 aa)) are N-terminal acylcarrier protein transacylase domain (SAT). The 431-residue stretch at 381 to 811 (HEKIAVIGMS…GGNTSLLLEE (431 aa)) folds into the Ketosynthase family 3 (KS3) domain. Active-site for beta-ketoacyl synthase activity residues include C554, H689, and H730. The malonyl-CoA:ACP transacylase (MAT) domain stretch occupies residues 910 to 1228 (FVFSGQGSFS…SMSALHSAGV (319 aa)). The interval 1291-1607 (TALVHHILEE…PRILMSRFFD (317 aa)) is product template (PT) domain. An N-terminal hotdog fold region spans residues 1295–1429 (HHILEESFGK…GVVTCGDSHS (135 aa)). The PKS/mFAS DH domain maps to 1295 to 1603 (HHILEESFGK…LRPLPRILMS (309 aa)). H1327 (proton acceptor; for dehydratase activity) is an active-site residue. The segment at 1456 to 1603 (LASRVSKDLV…LRPLPRILMS (148 aa)) is C-terminal hotdog fold. Catalysis depends on D1514, which acts as the Proton donor; for dehydratase activity. The disordered stretch occupies residues 1610–1670 (DSQYGQMAQQ…KAPISGSWPN (61 aa)). The segment covering 1612–1657 (QYGQMAQQEPSTALPSTPQHTSSAKTTESTPSQQDESDNTSLATPE) has biased composition (polar residues). Residues 1670 to 1747 (NANSQLVRDA…DLKAYLEGNQ (78 aa)) enclose the Carrier domain. S1707 is subject to O-(pantetheine 4'-phosphoryl)serine.

Requires pantetheine 4'-phosphate as cofactor. In terms of tissue distribution, expressed mainly in sclerotia, with expression levels 20-fold and 10-fold greater than the expression levels of this gene found in mycelium and conidia, respectively.

Its pathway is secondary metabolite biosynthesis. In terms of biological role, non-reducing polyketide synthase (NRPKS); part of the gene cluster that mediates the biosynthesis of aflavarin, a bicoumarin that exhibits anti-insectan activity against the fungivorous beetle C.hemipterus. Catalyzes the formation of the aromatic polyketide from acetyl coenzyme A and seven malonyl coenzyme A molecules. This chain is Non-reducing polyketide synthase afvB, found in Aspergillus flavus (strain ATCC 200026 / FGSC A1120 / IAM 13836 / NRRL 3357 / JCM 12722 / SRRC 167).